We begin with the raw amino-acid sequence, 229 residues long: Probable septum site-determining protein MinC (229 aa).

Belongs to the MinC family. As to quaternary structure, interacts with MinD and FtsZ.

Its function is as follows. Cell division inhibitor that blocks the formation of polar Z ring septums. Rapidly oscillates between the poles of the cell to destabilize FtsZ filaments that have formed before they mature into polar Z rings. Prevents FtsZ polymerization. This Ruminiclostridium cellulolyticum (strain ATCC 35319 / DSM 5812 / JCM 6584 / H10) (Clostridium cellulolyticum) protein is Probable septum site-determining protein MinC.